We begin with the raw amino-acid sequence, 499 residues long: Neuronal acetylcholine receptor subunit alpha-3 (499 aa).

An N-terminal signal peptide occupies residues 1 to 25; it reads MGVVLPPPPLSMLMLVLMLLPVASA. At 26 to 244 the chain is on the extracellular side; the sequence is SEAEHRLFQY…PLFYTINLII (219 aa). Asn49 and Asn166 each carry an N-linked (GlcNAc...) asparagine glycan. 2 disulfide bridges follow: Cys153–Cys167 and Cys217–Cys218. The chain crosses the membrane as a helical span at residues 245–260; it reads PCLLISFLTVLVFYLP. Topologically, residues 261–262 are cytoplasmic; sequence SD. The chain crosses the membrane as a helical span at residues 263–279; the sequence is CGEKVTLCISVLLSLTV. Glu265 contacts Na(+). The Extracellular segment spans residues 280–301; it reads FLLVITETIPSTSLVIPLIGEY. A helical membrane pass occupies residues 302–320; sequence LLFTMIFVTLSIVITVFVL. Residues 321 to 468 are Cytoplasmic-facing; sequence NVHYRTPTTH…QDDWKYVAMV (148 aa). 2 positions are modified to phosphoserine: Ser407 and Ser410. The helical transmembrane segment at 469–487 threads the bilayer; sequence IDRIFLWVFILVCILGTAG. At 488–499 the chain is on the extracellular side; sequence LFLQPLMARDDT.

The protein belongs to the ligand-gated ion channel (TC 1.A.9) family. Acetylcholine receptor (TC 1.A.9.1) subfamily. Alpha-3/CHRNA3 sub-subfamily. As to quaternary structure, neuronal AChR is composed of two different types of subunits: alpha and beta. CHRNA3/Alpha-3 subunit can be combined to CHRNB2/beta-2 or CHRNB4/beta-4 to give rise to functional receptors. Part of a complex composed of STUB1/CHIP, VCP/p97, CHRNA3, and UBXN2A that modulates the ubiquitination and endoplasmic reticulum-associated degradation (ERAD) of CHRNA3. Within the complex UBXN2A acts as a scaffold protein required for the interaction of CHRNA3 with VCP/p97, this interaction also inhibits CHRNA3 ubiquitination by STUB1/CHIP and subsequently ERAD. Interacts with UBXN2A (via SEP domain), the interaction is required for the interaction of CHRNA3 in the STUB1:VCP:UBXN2A complex. Interacts with RIC3; which is required for proper folding and assembly. Interacts with LYPD6. In terms of processing, ubiquitinated; by STUB1/CHIP and thereafter degraded by the 26S proteosome complex. In terms of tissue distribution, expressed in the brain (at protein level).

Its subcellular location is the synaptic cell membrane. It localises to the cell membrane. The protein localises to the endoplasmic reticulum. The protein resides in the golgi apparatus. It catalyses the reaction K(+)(in) = K(+)(out). The enzyme catalyses Na(+)(in) = Na(+)(out). It carries out the reaction Ca(2+)(in) = Ca(2+)(out). With respect to regulation, activated by a myriad of ligands such as acetylcholine, cytisine, nicotine, choline and epibatidine. The heteropentamer CHRNA3:CHRNB2 activity is blocked by alpha-conotoxins ImI, ImII, PnIA, GID and MII. The heteropentamer CHRNA3:CHRNB4 activity is blocked by the alpha-conotoxin ImI. Functionally, component of neuronal acetylcholine receptors (nAChRs) that function as pentameric, ligand-gated cation channels with high calcium permeability among other activities. nAChRs are excitatory neurotrasnmitter receptors formed by a collection of nAChR subunits known to mediate synaptic transmission in the nervous system and the neuromuscular junction. Each nAchR subunit confers differential attributes to channel properties, including activation, deactivation and desensitization kinetics, pH sensitivity, cation permeability, and binding to allosteric modulators. CHRNA3 forms heteropentameric neuronal acetylcholine receptors with CHRNA5, CHRNB2 and CHRNB4. CHRNA3:CHRNB4 being predominant in neurons of the autonomic ganglia, it is known as ganglionic nicotinic receptor. CHRNA3:CHRNB4 or CHRNA3:CHRNA5:CHRNB4 play also an important role in the habenulo-interpeduncular tract, modulating the mesolimbic dopamine system and affecting reward circuits and addiction. Hypothalamic CHRNA3:CHRNB4 nAChR activation by nicotine leads to activation of POMC neurons and a decrease in food intake. Also expressed in the urothelium where it modulates reflex bladder activity by increasing intracellular calcium through extracellular influx and basal ATP release. The polypeptide is Neuronal acetylcholine receptor subunit alpha-3 (Chrna3) (Mus musculus (Mouse)).